We begin with the raw amino-acid sequence, 195 residues long: MQQQQSPQMFPMVPSIPPANNITTEQIQKYLDENKKLIMAIMENQNLGKLAECAQYQALLQKNLMYLAAIADAQPPPPTPGPSPSTAVAAQMATPHSGMQPPSYFMQHPQASPAGIFAPRGPLQFGSPLQFQDPQQQQQIHQQAMQGHMGIRPMGMTNNGMQHAMQQPETGLGGNVGLRGGKQDGADGQGKDDGK.

The tract at residues 166-195 is disordered; the sequence is QQPETGLGGNVGLRGGKQDGADGQGKDDGK. Gly residues predominate over residues 171–180; the sequence is GLGGNVGLRG. Basic and acidic residues predominate over residues 181–195; that stretch reads GKQDGADGQGKDDGK.

This sequence belongs to the SS18 family. As to quaternary structure, interacts with GRF1. In terms of tissue distribution, predominantly expressed in shoot tips containing the shoot apical meristem (SAM) and flower buds. Also expressed in mature flowers.

Transcription coactivator that plays a role in the regulation of cell expansion in leaf and cotyledons tissues. Component of a network formed by miR396, the GRFs and their interacting factors (GIFs) acting in the regulation of meristem function, at least partially through the control of cell proliferation. GIFs are involved in the positive regulation of cell proliferation of lateral organs in a functionally redundant manner. This chain is GRF1-interacting factor 2 (GIF2), found in Arabidopsis thaliana (Mouse-ear cress).